The chain runs to 78 residues: Mitotic-spindle organizing protein 1 (78 aa).

A2 carries the N-acetylalanine modification.

Belongs to the MOZART1 family. In terms of assembly, associates with the gamma-tubulin ring complex (gTuRC) consisting of TUBGCP2, TUBGCP3, TUBGCP4, TUBGCP5 and TUBGCP6 and gamma-tubulin TUBG1 or TUBG2; within the complex, interacts with TUBGCP3 and TUBGCP6 to form a luminal bridge with actin that stabilizes the initial structure during complex assembly. Interacts with TUBG1.

Its subcellular location is the cytoplasm. It is found in the cytoskeleton. The protein localises to the microtubule organizing center. It localises to the centrosome. The protein resides in the spindle. Required for the recruitment and the assembly of the gamma-tubulin ring complex (gTuRC) at the centrosome. The gTuRC regulates the minus-end nucleation of alpha-beta tubulin heterodimers that grow into microtubule protafilaments, a critical step in centrosome duplication and spindle formation. The sequence is that of Mitotic-spindle organizing protein 1 (Mzt1) from Mus musculus (Mouse).